The primary structure comprises 382 residues: Lipid-A-disaccharide synthase (382 aa).

The protein belongs to the LpxB family.

It catalyses the reaction 2-N,3-O-bis[(3R)-3-hydroxytetradecanoyl]-alpha-D-glucosaminyl 1-phosphate + UDP-2-N,3-O-bis[(3R)-3-hydroxytetradecanoyl]-alpha-D-glucosamine = lipid A disaccharide (E. coli) + UDP + H(+). The catalysed reaction is a lipid X + a UDP-2-N,3-O-bis[(3R)-3-hydroxyacyl]-alpha-D-glucosamine = a lipid A disaccharide + UDP + H(+). It functions in the pathway glycolipid biosynthesis; lipid IV(A) biosynthesis; lipid IV(A) from (3R)-3-hydroxytetradecanoyl-[acyl-carrier-protein] and UDP-N-acetyl-alpha-D-glucosamine: step 5/6. Its function is as follows. Condensation of UDP-2,3-diacylglucosamine and 2,3-diacylglucosamine-1-phosphate to form lipid A disaccharide, a precursor of lipid A, a phosphorylated glycolipid that anchors the lipopolysaccharide to the outer membrane of the cell. The polypeptide is Lipid-A-disaccharide synthase (Salmonella agona (strain SL483)).